The chain runs to 186 residues: TATA box-binding protein-like 1 (186 aa).

Belongs to the TBP family.

The protein resides in the cytoplasm. It localises to the nucleus. Functionally, part of a specialized transcription system that mediates the transcription of most ribosomal proteins through the 5'-TCT-3' motif which is a core promoter element at these genes. Seems to also mediate the transcription of NF1. Does not bind the TATA box. Members of the TBP family are differentially required to regulate transcription and development during early embryogenesis. The polypeptide is TATA box-binding protein-like 1 (Danio rerio (Zebrafish)).